A 63-amino-acid polypeptide reads, in one-letter code: MRKPITLILVVALALVLLATSEVSAYRACGFPGRRCSPTEECCEGLVCQPRKNGPSMCYRPDP.

Positions 1–25 are cleaved as a signal peptide; that stretch reads MRKPITLILVVALALVLLATSEVSA. Disulfide bonds link Cys29–Cys43, Cys36–Cys48, and Cys42–Cys58.

As to expression, expressed by the venom gland.

It localises to the secreted. This chain is Cysteine-rich venom protein 3, found in Pimpla hypochondriaca (Parasitoid wasp).